The primary structure comprises 827 residues: Cadherin-17 (827 aa).

The first 21 residues, 1-21 (MVSAQLHFLCLLTLYLTGAYG), serve as a signal peptide directing secretion. Topologically, residues 22–786 (QEGKFSGPLK…NQVGIPTVGM (765 aa)) are extracellular. Cadherin domains lie at 29-127 (PLKP…TFLQ), 128-243 (TKYE…APEP), 244-339 (VEIR…PPTC), 340-448 (LSQV…IPIF), 449-565 (ERSD…VPVF), 566-666 (PQQI…PPRL), and 667-776 (AKDY…RPAG). N-linked (GlcNAc...) asparagine glycosylation is found at N148, N183, N249, N418, N545, N573, and N721. Residues 787-807 (AVGILLTTFLVIGIILAVVFI) form a helical membrane-spanning segment. Residues 808–827 (RMRKDKVEDPQSPENKPLRS) lie on the Cytoplasmic side of the membrane.

In terms of tissue distribution, liver and intestine.

Its subcellular location is the cell membrane. Cadherins are calcium-dependent cell adhesion proteins. They preferentially interact with themselves in a homophilic manner in connecting cells; cadherins may thus contribute to the sorting of heterogeneous cell types. LI-cadherin may have a role in the morphological organization of liver and intestine. This is Cadherin-17 (Cdh17) from Rattus norvegicus (Rat).